Here is a 645-residue protein sequence, read N- to C-terminus: ATP-dependent zinc metalloprotease FtsH (645 aa).

Topologically, residues 1–8 (MDFNREHK) are cytoplasmic. Residues 9-29 (INFLYVLAAMVGVLLIQSLVS) traverse the membrane as a helical segment. Topologically, residues 30-105 (QPDHIRTIPY…FSGEPEPGPW (76 aa)) are periplasmic. A helical transmembrane segment spans residues 106-126 (PTILGWLMPIVGFALVWMFLI). Residues 127–645 (RPMSMGPGMD…ALTVEGGEAQ (519 aa)) are Cytoplasmic-facing. Residue 199–206 (GPPGTGKT) coordinates ATP. His423 provides a ligand contact to Zn(2+). Glu424 is an active-site residue. His427 and Asp500 together coordinate Zn(2+). Residues 612–645 (SASVLRDGGDGAADAGQDRSGEHRALTVEGGEAQ) form a disordered region. A compositionally biased stretch (basic and acidic residues) spans 627–637 (GQDRSGEHRAL).

It in the central section; belongs to the AAA ATPase family. This sequence in the C-terminal section; belongs to the peptidase M41 family. In terms of assembly, homohexamer. Zn(2+) serves as cofactor.

Its subcellular location is the cell inner membrane. In terms of biological role, acts as a processive, ATP-dependent zinc metallopeptidase for both cytoplasmic and membrane proteins. Plays a role in the quality control of integral membrane proteins. This is ATP-dependent zinc metalloprotease FtsH from Paraburkholderia phymatum (strain DSM 17167 / CIP 108236 / LMG 21445 / STM815) (Burkholderia phymatum).